Reading from the N-terminus, the 1488-residue chain is Indigoidine synthase (1488 aa).

Residues 229-585 (KNRAQRHPEQ…GGDGVARGYL (357 aa)) form an adenylation region. In terms of domain architecture, Carrier spans 1137–1212 (APRNPLEHQV…KLAAWLSRAR (76 aa)). Residue Ser-1172 is modified to O-(pantetheine 4'-phosphoryl)serine. A thioesterase region spans residues 1230–1346 (PIYCWPGLGG…ERVAAMNRKA (117 aa)).

It belongs to the ATP-dependent AMP-binding enzyme family. The cofactor is pantetheine 4'-phosphate.

It catalyses the reaction 2 FMN + 2 L-glutamine + 2 ATP + O2 = indigoidine + 2 FMNH2 + 2 AMP + 2 diphosphate + 2 H2O. The enzyme catalyses FMN + L-glutamine + ATP = 3-amino-1,5-dihydropyridine-2,6-dione + FMNH2 + AMP + diphosphate. It carries out the reaction 2 3-amino-1,5-dihydropyridine-2,6-dione + O2 = indigoidine + 2 H2O. Its pathway is pigment biosynthesis. Nonribosomal peptide synthetase involved in the biosynthesis of the blue pigment indigoidine, which is implicated in pathogenicity and protection from oxidative stress. Catalyzes the synthesis of the blue pigment using L-Gln as a substrate. Two glutamine molecules are cyclized and oxidized to form indigoidine. The polypeptide is Indigoidine synthase (Dickeya dadantii (strain 3937) (Erwinia chrysanthemi (strain 3937))).